The sequence spans 593 residues: ESX-1 secretion system protein EccCb1 (593 aa).

FtsK domains follow at residues 66-260 (RQEV…NETQ) and 350-546 (QVPL…EKND). ATP-binding positions include 85–92 (GAPQTGKS) and 377–384 (GAPKSGKT).

In terms of assembly, part of the ESX-1 / type VII secretion system (T7SS), which is composed of cytosolic and membrane components. The ESX-1 membrane complex is composed of EccB1, EccCa1, EccCb1, EccD1 and EccE1.

It is found in the cytoplasm. Functionally, part of the ESX-1 / type VII specialized secretion system (T7SS), which exports several proteins including EsxA and EsxB. Plays a role in DNA conjugation, in both donor and recipient strains. The polypeptide is ESX-1 secretion system protein EccCb1 (Mycolicibacterium smegmatis (strain ATCC 700084 / mc(2)155) (Mycobacterium smegmatis)).